We begin with the raw amino-acid sequence, 207 residues long: Outer-membrane lipoprotein LolB (207 aa).

The signal sequence occupies residues 1-21; that stretch reads MPMRKRHFYRLLPLASLLLAA. The N-palmitoyl cysteine moiety is linked to residue Cys22. A lipid anchor (S-diacylglycerol cysteine) is attached at Cys22.

The protein belongs to the LolB family. As to quaternary structure, monomer.

It localises to the cell outer membrane. In terms of biological role, plays a critical role in the incorporation of lipoproteins in the outer membrane after they are released by the LolA protein. The polypeptide is Outer-membrane lipoprotein LolB (Yersinia pseudotuberculosis serotype O:3 (strain YPIII)).